The following is a 384-amino-acid chain: Secreted LysM effector LysM14 (384 aa).

The signal sequence occupies residues 1-35 (MGWSPRWKVMLRGIFNAMISIHILLSLLFAHIATA). The 49-residue stretch at 64 to 112 (YTYTIQEGDTCAKLAQRYQVTTSNIETWNVGSWGWPGCAKIKQGDFVCL) folds into the LysM domain. A disordered region spans residues 185–220 (STTKSAASKTTTTSNPTTTSKTTITSKPTTTSKPTT).

This sequence belongs to the secreted LysM effector family.

It localises to the secreted. In terms of biological role, secreted LysM effector that might have a role in sequestration of chitin oligosaccharides (breakdown products of fungal cell walls that are released during invasion and act as triggers of host immunity) to dampen host defense. The protein is Secreted LysM effector LysM14 of Penicillium expansum (Blue mold rot fungus).